Here is a 365-residue protein sequence, read N- to C-terminus: DNA replication and repair protein RecF (365 aa).

30–37 serves as a coordination point for ATP; the sequence is GLNAQGKT.

The protein belongs to the RecF family.

The protein resides in the cytoplasm. Its function is as follows. The RecF protein is involved in DNA metabolism; it is required for DNA replication and normal SOS inducibility. RecF binds preferentially to single-stranded, linear DNA. It also seems to bind ATP. The sequence is that of DNA replication and repair protein RecF from Chlamydia trachomatis serovar L2b (strain UCH-1/proctitis).